The sequence spans 330 residues: 4,5-dihydroxyphthalate decarboxylase (330 aa).

The protein to P.putida DHP decarboxylase.

The catalysed reaction is 4,5-dihydroxyphthalate + H(+) = 3,4-dihydroxybenzoate + CO2. Its pathway is xenobiotic degradation; phthalate degradation; 3,4-dihydroxybenzoate from phthalate: step 3/3. This chain is 4,5-dihydroxyphthalate decarboxylase (phtD), found in Comamonas testosteroni (Pseudomonas testosteroni).